A 179-amino-acid polypeptide reads, in one-letter code: Protein LDB18 (179 aa).

Functionally, may be involved in protein-linked oligosaccharide phosphorylation since the deletion reduces the negative charge of the cell surface. The protein is Protein LDB18 (LDB18) of Saccharomyces cerevisiae (strain ATCC 204508 / S288c) (Baker's yeast).